A 535-amino-acid polypeptide reads, in one-letter code: Alpha-1,3-mannosyl-glycoprotein 4-beta-N-acetylglucosaminyltransferase A (535 aa).

The Cytoplasmic segment spans residues 1–6 (MRLRNG). A helical; Signal-anchor for type II membrane protein transmembrane segment spans residues 7–27 (TVATVLAFITSFLTLSWYTTW). At 28-535 (QNGKEKVIAY…NEIHIKKVTN (508 aa)) the chain is on the lumenal side. Residues 31 to 57 (KEKVIAYQREFLALKERLRIAEHRISQ) adopt a coiled-coil conformation. N-linked (GlcNAc...) asparagine glycans are attached at residues Asn77 and Asn458. Ser474 carries the phosphoserine modification.

It belongs to the glycosyltransferase 54 family. Requires a divalent metal cation as cofactor. N-glycosylated. Highly expressed in small intestine, kidney, lung and spleen. Weakly expressed in brain, heart and liver.

The protein resides in the golgi apparatus membrane. It is found in the secreted. It carries out the reaction N(4)-{beta-D-GlcNAc-(1-&gt;2)-alpha-D-Man-(1-&gt;3)-[beta-D-GlcNAc-(1-&gt;2)-alpha-D-Man-(1-&gt;6)]-beta-D-Man-(1-&gt;4)-beta-D-GlcNAc-(1-&gt;4)-beta-D-GlcNAc}-L-asparaginyl-[protein] + UDP-N-acetyl-alpha-D-glucosamine = N(4)-{beta-D-GlcNAc-(1-&gt;2)-[beta-D-GlcNAc-(1-&gt;4)]-alpha-D-Man-(1-&gt;3)-[beta-D-GlcNAc-(1-&gt;2)-alpha-D-Man-(1-&gt;6)]-beta-D-Man-(1-&gt;4)-beta-D-GlcNAc-(1-&gt;4)-beta-D-GlcNAc}-L-asparaginyl-[protein] + UDP + H(+). The catalysed reaction is an N(4)-{beta-D-GlcNAc-(1-&gt;2)-alpha-D-Man-(1-&gt;3)-[alpha-D-Man-(1-&gt;6)]-beta-D-Man-(1-&gt;4)-beta-D-GlcNAc-(1-&gt;4)-beta-D-GlcNAc}-L-asparaginyl-[protein] + UDP-N-acetyl-alpha-D-glucosamine = an N(4)-{beta-D-GlcNAc-(1-&gt;2)-[beta-D-GlcNAc-(1-&gt;4)]-alpha-D-Man-(1-&gt;3)-[alpha-D-Man-(1-&gt;6)]-beta-D-Man-(1-&gt;4)-beta-D-GlcNAc-(1-&gt;4)-beta-D-GlcNAc}-L-asparaginyl-[protein] + UDP + H(+). It catalyses the reaction an N(4)-{beta-D-GlcNAc-(1-&gt;2)-alpha-D-Man-(1-&gt;3)-[beta-D-GlcNAc-(1-&gt;2)-[beta-D-GlcNAc-(1-&gt;6)]-alpha-D-Man-(1-&gt;6)]-beta-D-Man-(1-&gt;4)-beta-D-GlcNAc-(1-&gt;4)-beta-D-GlcNAc}-L-asparaginyl-[protein] + UDP-N-acetyl-alpha-D-glucosamine = an N(4)-{beta-D-GlcNAc-(1-&gt;2)-[beta-D-GlcNAc-(1-&gt;4)]-alpha-D-Man-(1-&gt;3)-[beta-D-GlcNAc-(1-&gt;2)-[beta-D-GlcNAc-(1-&gt;6)]-alpha-D-Man-(1-&gt;6)]-beta-D-Man-(1-&gt;4)-beta-D-GlcNAc-(1-&gt;4)-beta-D-GlcNAc}-L-asparaginyl-[protein] + UDP + H(+). The enzyme catalyses an N(4)-{beta-D-GlcNAc-(1-&gt;2)-alpha-D-Man-(1-&gt;3)-[beta-D-GlcNAc-(1-&gt;2)-alpha-D-Man-(1-&gt;6)]-beta-D-Man-(1-&gt;4)-beta-D-GlcNAc-(1-&gt;4)-[alpha-L-Fuc-(1-&gt;6)]-beta-D-GlcNAc}-L-asparaginyl-[protein] + UDP-N-acetyl-alpha-D-glucosamine = N(4)-{beta-D-GlcNAc-(1-&gt;2)-[beta-D-GlcNAc-(1-&gt;4)]-alpha-D-Man-(1-&gt;3)-[beta-D-GlcNAc-(1-&gt;2)-alpha-D-Man-(1-&gt;6)]-beta-D-Man-(1-&gt;4)-beta-D-GlcNAc-(1-&gt;4)-[alpha-L-Fuc-(1-&gt;6)]-beta-D-GlcNAc}-asparaginyl-[protein] + UDP + H(+). It carries out the reaction an N(4)-{beta-D-GlcNAc-(1-&gt;2)-alpha-D-Man-(1-&gt;3)-[beta-D-Gal-(1-&gt;4)-beta-D-GlcNAc-(1-&gt;2)-alpha-D-Man-(1-&gt;6)]-beta-D-Man-(1-&gt;4)-beta-D-GlcNAc-(1-&gt;4)-beta-D-GlcNAc}-L-asparaginyl-[protein] + UDP-N-acetyl-alpha-D-glucosamine = an N(4)-{beta-D-GlcNAc-(1-&gt;2)-[beta-D-GlcNAc-(1-&gt;4)]-alpha-D-Man-(1-&gt;3)-[beta-D-Gal-(1-&gt;4)-beta-D-GlcNAc-(1-&gt;2)-alpha-D-Man-(1-&gt;6)]-beta-D-Man-(1-&gt;4)-beta-D-GlcNAc-(1-&gt;4)-beta-D-GlcNAc}-L-asparaginyl-[protein] + UDP + H(+). The catalysed reaction is N(4)-{beta-D-GlcNAc-(1-&gt;2)-alpha-D-Man-(1-&gt;3)-[alpha-D-Man-(1-&gt;3)-{alpha-D-Man-(1-&gt;6)}-alpha-D-Man-(1-&gt;6)]-beta-D-Man-(1-&gt;4)-beta-D-GlcNAc-(1-&gt;4)-beta-D-GlcNAc}-asparaginyl-[protein] + UDP-N-acetyl-alpha-D-glucosamine = N(4)-{beta-D-GlcNAc-(1-&gt;2)-[beta-D-GlcNAc-(1-&gt;4)]-alpha-D-Man-(1-&gt;3)-[alpha-D-Man-(1-&gt;3)-{alpha-D-Man-(1-&gt;6)}-alpha-D-Man-(1-&gt;6)]-beta-D-Man-(1-&gt;4)-beta-D-GlcNAc-(1-&gt;4)-beta-D-GlcNAc}-asparaginyl-[protein] + UDP + H(+). It catalyses the reaction N(4)-{beta-D-GlcNAc-(1-&gt;2)-alpha-D-Man-(1-&gt;3)-beta-D-Man-(1-&gt;4)-beta-D-GlcNAc-(1-&gt;4)-beta-D-GlcNAc}-asparaginyl-[protein] + UDP-N-acetyl-alpha-D-glucosamine = N(4)-{beta-D-GlcNAc-(1-&gt;2)-[beta-D-GlcNAc-(1-&gt;4)]-alpha-D-Man-(1-&gt;3)-beta-D-Man-(1-&gt;4)-beta-D-GlcNAc-(1-&gt;4)-beta-D-GlcNAc}-asparaginyl-[protein] + UDP + H(+). Its pathway is protein modification; protein glycosylation. With respect to regulation, inhibited by UDP. In terms of biological role, glycosyltransferase that catalyze the transfer of GlcNAc from UDP-GlcNAc to the GlcNAcbeta1-2Manalpha1-3 arm of the core structure of N-linked glycans through a beta1-4 linkage and participates in the production of tri- and tetra-antennary N-linked sugar chains. Involved in glucose transport by mediating SLC2A2/GLUT2 glycosylation, thereby controlling cell-surface expression of SLC2A2 in pancreatic beta cells. This Bos taurus (Bovine) protein is Alpha-1,3-mannosyl-glycoprotein 4-beta-N-acetylglucosaminyltransferase A.